We begin with the raw amino-acid sequence, 338 residues long: Very-long-chain 3-oxoacyl-CoA reductase (338 aa).

Residues 20 to 40 (LSAFLLVMGSIGVGRVIYQTL) traverse the membrane as a helical segment. NADP(+)-binding residues include Val66, Asn95, Asp120, Asn147, Tyr214, Lys218, Val247, and Ser249. Tyr214 functions as the Proton donor in the catalytic mechanism. Catalysis depends on Lys218, which acts as the Lowers pKa of active site Tyr.

Belongs to the short-chain dehydrogenases/reductases (SDR) family.

The protein localises to the endoplasmic reticulum membrane. The catalysed reaction is a very-long-chain (3R)-3-hydroxyacyl-CoA + NADP(+) = a very-long-chain 3-oxoacyl-CoA + NADPH + H(+). Its pathway is lipid metabolism; fatty acid biosynthesis. Component of the microsomal membrane bound fatty acid elongation system, which produces the 26-carbon very long-chain fatty acids (VLCFA) from palmitate. Catalyzes the reduction of the 3-ketoacyl-CoA intermediate that is formed in each cycle of fatty acid elongation. VLCFAs serve as precursors for ceramide and sphingolipids. This chain is Very-long-chain 3-oxoacyl-CoA reductase, found in Laccaria bicolor (strain S238N-H82 / ATCC MYA-4686) (Bicoloured deceiver).